We begin with the raw amino-acid sequence, 540 residues long: T-complex protein 1 subunit delta (540 aa).

A compositionally biased stretch (low complexity) spans 1 to 12 (MPPAVPAAAATA). The disordered stretch occupies residues 1-32 (MPPAVPAAAATARQSASGRERNFKDKDKPESV). Residues 18–31 (GRERNFKDKDKPES) show a composition bias toward basic and acidic residues.

Belongs to the TCP-1 chaperonin family. In terms of assembly, heterooligomeric complex of about 850 to 900 kDa that forms two stacked rings, 12 to 16 nm in diameter.

It localises to the cytoplasm. Functionally, molecular chaperone; assists the folding of proteins upon ATP hydrolysis. Known to play a role, in vitro, in the folding of actin and tubulin. This is T-complex protein 1 subunit delta (cct-4) from Caenorhabditis elegans.